The sequence spans 492 residues: Protein nucleotidyltransferase YdiU (492 aa).

Gly-88, Gly-90, Arg-91, Lys-111, Asp-123, Gly-124, Arg-174, and Arg-181 together coordinate ATP. Asp-250 functions as the Proton acceptor in the catalytic mechanism. Residues Asn-251 and Asp-260 each contribute to the Mg(2+) site. Position 260 (Asp-260) interacts with ATP.

Belongs to the SELO family. It depends on Mg(2+) as a cofactor. The cofactor is Mn(2+).

The catalysed reaction is L-seryl-[protein] + ATP = 3-O-(5'-adenylyl)-L-seryl-[protein] + diphosphate. It catalyses the reaction L-threonyl-[protein] + ATP = 3-O-(5'-adenylyl)-L-threonyl-[protein] + diphosphate. It carries out the reaction L-tyrosyl-[protein] + ATP = O-(5'-adenylyl)-L-tyrosyl-[protein] + diphosphate. The enzyme catalyses L-histidyl-[protein] + UTP = N(tele)-(5'-uridylyl)-L-histidyl-[protein] + diphosphate. The catalysed reaction is L-seryl-[protein] + UTP = O-(5'-uridylyl)-L-seryl-[protein] + diphosphate. It catalyses the reaction L-tyrosyl-[protein] + UTP = O-(5'-uridylyl)-L-tyrosyl-[protein] + diphosphate. Its function is as follows. Nucleotidyltransferase involved in the post-translational modification of proteins. It can catalyze the addition of adenosine monophosphate (AMP) or uridine monophosphate (UMP) to a protein, resulting in modifications known as AMPylation and UMPylation. The polypeptide is Protein nucleotidyltransferase YdiU (Rhodopseudomonas palustris (strain BisB5)).